The primary structure comprises 491 residues: Probable glycine dehydrogenase (decarboxylating) subunit 2 (491 aa).

Lys273 carries the N6-(pyridoxal phosphate)lysine modification.

Belongs to the GcvP family. C-terminal subunit subfamily. In terms of assembly, the glycine cleavage system is composed of four proteins: P, T, L and H. In this organism, the P 'protein' is a heterodimer of two subunits. The cofactor is pyridoxal 5'-phosphate.

It carries out the reaction N(6)-[(R)-lipoyl]-L-lysyl-[glycine-cleavage complex H protein] + glycine + H(+) = N(6)-[(R)-S(8)-aminomethyldihydrolipoyl]-L-lysyl-[glycine-cleavage complex H protein] + CO2. In terms of biological role, the glycine cleavage system catalyzes the degradation of glycine. The P protein binds the alpha-amino group of glycine through its pyridoxal phosphate cofactor; CO(2) is released and the remaining methylamine moiety is then transferred to the lipoamide cofactor of the H protein. This Bacillus anthracis (strain A0248) protein is Probable glycine dehydrogenase (decarboxylating) subunit 2.